Reading from the N-terminus, the 185-residue chain is Iron-sulfur assembly protein 2 (185 aa).

Fe cation-binding residues include Cys89, Cys175, and Cys177.

Belongs to the HesB/IscA family.

The protein localises to the mitochondrion matrix. Involved in the assembly of mitochondrial and cytoplasmic iron-sulfur proteins. Probably involved in the binding of an intermediate of Fe/S cluster assembly. This chain is Iron-sulfur assembly protein 2 (ISA2), found in Saccharomyces cerevisiae (strain ATCC 204508 / S288c) (Baker's yeast).